The sequence spans 147 residues: Sentan (147 aa).

The disordered stretch occupies residues 1-36 (MGGCMHSTWDHALHSRGEPRPSEAPASISAPSKMPK). Positions 8 to 21 (TWDHALHSRGEPRP) are enriched in basic and acidic residues. Residues 23 to 32 (EAPASISAPS) are compositionally biased toward low complexity.

It belongs to the S-100 family. Expressed exclusively in ciliated epithelial cells. Detected in ciliated epithelium of trachea and oviduct (at protein level).

Its subcellular location is the cell projection. The protein localises to the cilium. Functionally, may be a component of the linker structure that bridges the ciliary membrane and peripheral singlet microtubules. The chain is Sentan (Sntn) from Mus musculus (Mouse).